The following is a 1122-amino-acid chain: Maestro heat-like repeat-containing protein family member 7 (1122 aa).

Disordered stretches follow at residues 1-144 (MALS…LSED) and 183-203 (SHTI…NTSL). The segment covering 33–65 (TTPRPTPDLTLAPLPAHGVALAPALHPALSPDP) has biased composition (low complexity). Polar residues-rich tracts occupy residues 75 to 95 (DISN…INTA), 120 to 136 (PVPS…SPEN), and 184 to 203 (HTIS…NTSL). Residues Asn200, Asn210, Asn255, Asn267, and Asn296 are each glycosylated (N-linked (GlcNAc...) asparagine). Positions 246 to 265 (WNTGSKGSVNVTSNSQPRSG) are disordered. Ser356 is modified (phosphoserine). The segment at 363–385 (FRSPPEGTSEDAKANESEKRDHD) is disordered. Positions 372–385 (EDAKANESEKRDHD) are enriched in basic and acidic residues. 2 N-linked (GlcNAc...) asparagine glycosylation sites follow: Asn541 and Asn546. 2 helical membrane-spanning segments follow: residues 548–568 (TLVT…LLLG) and 722–742 (LLPI…ALLM). HEAT repeat units lie at residues 913–950 (QELC…MEQV), 992–1029 (TKVQ…GQAK), 1035–1072 (SVYI…KLRM), and 1080–1117 (EQLT…FFLL).

The protein localises to the membrane. The polypeptide is Maestro heat-like repeat-containing protein family member 7 (Mroh7) (Rattus norvegicus (Rat)).